The sequence spans 190 residues: uncharacterized protein (190 aa).

The chain crosses the membrane as a helical span at residues 12–34 (LLGLSIFLTTFLFVANFLPGIFA).

It localises to the membrane. This is an uncharacterized protein from Archaeoglobus fulgidus (strain ATCC 49558 / DSM 4304 / JCM 9628 / NBRC 100126 / VC-16).